Reading from the N-terminus, the 247-residue chain is Ribonuclease PH (247 aa).

Phosphate is bound by residues R96 and 134–136 (GTR).

It belongs to the RNase PH family. In terms of assembly, homohexameric ring arranged as a trimer of dimers.

The catalysed reaction is tRNA(n+1) + phosphate = tRNA(n) + a ribonucleoside 5'-diphosphate. Its function is as follows. Phosphorolytic 3'-5' exoribonuclease that plays an important role in tRNA 3'-end maturation. Removes nucleotide residues following the 3'-CCA terminus of tRNAs; can also add nucleotides to the ends of RNA molecules by using nucleoside diphosphates as substrates, but this may not be physiologically important. Probably plays a role in initiation of 16S rRNA degradation (leading to ribosome degradation) during starvation. This chain is Ribonuclease PH, found in Tropheryma whipplei (strain TW08/27) (Whipple's bacillus).